The chain runs to 338 residues: Thiosulfate-binding protein (338 aa).

The first 25 residues, 1–25 (MAVNLLKKNSLALVASLLLAGHVQA), serve as a signal peptide directing secretion.

The protein belongs to the prokaryotic sulfate-binding protein family. As to quaternary structure, the complex is composed of two ATP-binding proteins (CysA), two transmembrane proteins (CysT and CysW) and a solute-binding protein (CysP).

It localises to the periplasm. Its function is as follows. Part of the ABC transporter complex CysAWTP (TC 3.A.1.6.1) involved in sulfate/thiosulfate import. This protein specifically binds thiosulfate and is involved in its transmembrane transport. This Escherichia coli (strain K12) protein is Thiosulfate-binding protein (cysP).